The primary structure comprises 1020 residues: Tetrathionate reductase subunit A (1020 aa).

The segment at residues 1–33 (MANLTRRQWLKVGLAVGGMVTFGLSYRDVAKRA) is a signal peptide (tat-type signal). Residues 71 to 154 (QTIAMTQCFG…TLLESLYSPL (84 aa)) form the 4Fe-4S Mo/W bis-MGD-type domain. 4 residues coordinate [4Fe-4S] cluster: C78, C81, C85, and C140.

It belongs to the prokaryotic molybdopterin-containing oxidoreductase family. As to quaternary structure, probably composed of three subunits: TtrA, TtrB and TtrC. The cofactor is [4Fe-4S] cluster. Requires Mo-bis(molybdopterin guanine dinucleotide) as cofactor. In terms of processing, predicted to be exported by the Tat system. The position of the signal peptide cleavage has not been experimentally proven.

It localises to the periplasm. It is found in the cell inner membrane. Part of a membrane-bound tetrathionate reductase that catalyzes the reduction of tetrathionate to thiosulfate. TtrA is the catalytic subunit. During mice infection, the ability to use tetrathionate as an electron acceptor is a growth advantage for S.typhimurium over the competing microbiota in the lumen of the inflamed gut. The polypeptide is Tetrathionate reductase subunit A (ttrA) (Salmonella typhimurium (strain LT2 / SGSC1412 / ATCC 700720)).